A 116-amino-acid polypeptide reads, in one-letter code: Dynein light chain Tctex-type 3 (116 aa).

Y4 is modified (3'-nitrotyrosine).

It belongs to the dynein light chain Tctex-type family. In terms of assembly, homodimer. The cytoplasmic dynein 1 complex consists of two catalytic heavy chains (HCs) and a number of non-catalytic subunits presented by intermediate chains (ICs), light intermediate chains (LICs) and light chains (LCs); the composition seems to vary in respect to the IC, LIC and LC composition. The heavy chain homodimer serves as a scaffold for the probable homodimeric assembly of the respective non-catalytic subunits. The ICs and LICs bind directly to the HC dimer and the LCs assemble on the IC dimer. DYNLT1 and DYNLT3 compete for association with dynein IC (DYNC1I1 or DYNC1I2). Self-associates. Interacts with DYNC1I1 and DYNC1I2. Interacts with BUB3. Interacts with SATB1 in nucleus to form complex with matrix attachment regions (MARs) of DNA.

The protein localises to the nucleus. It is found in the cytoplasm. It localises to the cytoskeleton. The protein resides in the chromosome. Its subcellular location is the centromere. The protein localises to the kinetochore. Functionally, acts as one of several non-catalytic accessory components of the cytoplasmic dynein 1 complex that are thought to be involved in linking dynein to cargos and to adapter proteins that regulate dynein function. Cytoplasmic dynein 1 acts as a motor for the intracellular retrograde motility of vesicles and organelles along microtubules. Probably binds BUB3 as part of transport cargo. Required for the efficient progression through mitosis. The polypeptide is Dynein light chain Tctex-type 3 (DYNLT3) (Ovis aries (Sheep)).